Reading from the N-terminus, the 723-residue chain is UPF0313 protein YgiQ (723 aa).

Positions 372 to 650 (AYEMIRFSIN…KALLRYHDPA (279 aa)) constitute a Radical SAM core domain. The [4Fe-4S] cluster site is built by Cys386, Cys390, and Cys393. The disordered stretch occupies residues 686–723 (EARRQNRNTRPALTKHTPVEHQRQGLAANKKRGKGAGR). Residues 714–723 (NKKRGKGAGR) are compositionally biased toward basic residues.

It belongs to the UPF0313 family. [4Fe-4S] cluster serves as cofactor.

The polypeptide is UPF0313 protein YgiQ (Salmonella typhimurium (strain LT2 / SGSC1412 / ATCC 700720)).